A 260-amino-acid chain; its full sequence is uncharacterized protein (260 aa).

The HTH iclR-type domain occupies 7–67 (VPALTRAIDI…DHQENFCLWT (61 aa)). The H-T-H motif DNA-binding region spans 28–47 (AATIIDTLGIPKSTAYLLLN). Residues 82–251 (LRELARPRLT…ARDISRLLGW (170 aa)) enclose the IclR-ED domain.

This is an uncharacterized protein from Escherichia coli (strain K12).